A 229-amino-acid polypeptide reads, in one-letter code: Ribonuclease S-6 (229 aa).

An N-terminal signal peptide occupies residues 1 to 27 (MGITGMIYMVPMVFSLIVLISCSSTMG). RNA is bound at residue glutamine 36. Cysteine 42 and cysteine 49 are joined by a disulfide. RNA is bound at residue histidine 60. The active-site Proton donor is the histidine 60. Cysteine 75 and cysteine 119 are oxidised to a cystine. N-linked (GlcNAc) asparagine glycans are attached at residues asparagine 77 and asparagine 87. RNA-binding positions include 98–99 (NV), phenylalanine 108, 111–112 (RQ), and 115–116 (KH). The active site involves glutamine 112. Histidine 116 acts as the Proton acceptor in catalysis. An N-linked (GlcNAc...) (high mannose) asparagine glycan is attached at asparagine 145. 2 disulfides stabilise this stretch: cysteine 184-cysteine 222 and cysteine 199-cysteine 210. Asparagine 188 carries N-linked (GlcNAc) asparagine; alternate glycosylation. N-linked (GlcNAc...) asparagine; alternate glycosylation is found at asparagine 188 and asparagine 203.

Belongs to the RNase T2 family. The N-glycans attached at Asn-188 and Asn-203 consist of either monosaccharide (GlcNAc) or disaccharide (GlcNAc-GlcNAc) that could not be distinguished.

The catalysed reaction is a ribonucleotidyl-ribonucleotide-RNA + H2O = a 3'-end 3'-phospho-ribonucleotide-RNA + a 5'-end dephospho-ribonucleoside-RNA + H(+). Its function is as follows. Self-incompatibility (SI) is the inherited ability of a flowering plant to prevent self-fertilization by discriminating between self and non-self pollen during pollination. In many species, self-incompatibility is controlled by the single, multiallelic locus S. The protein is Ribonuclease S-6 of Pyrus pyrifolia (Chinese pear).